The primary structure comprises 270 residues: NADPH-dependent 7-cyano-7-deazaguanine reductase (270 aa).

79–81 (IES) serves as a coordination point for substrate. 81-82 (SK) is a binding site for NADPH. Cysteine 177 acts as the Thioimide intermediate in catalysis. The active-site Proton donor is aspartate 184. 216–217 (HE) contributes to the substrate binding site. 245 to 246 (RG) contacts NADPH.

This sequence belongs to the GTP cyclohydrolase I family. QueF type 2 subfamily. Homodimer.

It localises to the cytoplasm. The catalysed reaction is 7-aminomethyl-7-carbaguanine + 2 NADP(+) = 7-cyano-7-deazaguanine + 2 NADPH + 3 H(+). Its pathway is tRNA modification; tRNA-queuosine biosynthesis. Functionally, catalyzes the NADPH-dependent reduction of 7-cyano-7-deazaguanine (preQ0) to 7-aminomethyl-7-deazaguanine (preQ1). The sequence is that of NADPH-dependent 7-cyano-7-deazaguanine reductase from Acinetobacter baumannii (strain AB307-0294).